Reading from the N-terminus, the 249-residue chain is 2,3-bisphosphoglycerate-dependent phosphoglycerate mutase (249 aa).

Residues 9 to 16 (RHGQSQWN), 22 to 23 (TG), Arg-61, 88 to 91 (ERHY), Lys-99, 115 to 116 (RR), and 184 to 185 (GN) contribute to the substrate site. His-10 (tele-phosphohistidine intermediate) is an active-site residue. The active-site Proton donor/acceptor is the Glu-88.

Belongs to the phosphoglycerate mutase family. BPG-dependent PGAM subfamily. As to quaternary structure, homodimer.

It catalyses the reaction (2R)-2-phosphoglycerate = (2R)-3-phosphoglycerate. It participates in carbohydrate degradation; glycolysis; pyruvate from D-glyceraldehyde 3-phosphate: step 3/5. Its function is as follows. Catalyzes the interconversion of 2-phosphoglycerate and 3-phosphoglycerate. The chain is 2,3-bisphosphoglycerate-dependent phosphoglycerate mutase from Xylella fastidiosa (strain 9a5c).